Reading from the N-terminus, the 591-residue chain is L-fucose isomerase (591 aa).

Active-site proton acceptor residues include Glu-337 and Asp-361. Residues Glu-337, Asp-361, and His-528 each contribute to the Mn(2+) site.

The protein belongs to the L-fucose isomerase family. Homohexamer. It depends on Mn(2+) as a cofactor.

Its subcellular location is the cytoplasm. It carries out the reaction L-fucose = L-fuculose. It participates in carbohydrate degradation; L-fucose degradation; L-lactaldehyde and glycerone phosphate from L-fucose: step 1/3. In terms of biological role, converts the aldose L-fucose into the corresponding ketose L-fuculose. This Citrobacter koseri (strain ATCC BAA-895 / CDC 4225-83 / SGSC4696) protein is L-fucose isomerase.